The chain runs to 456 residues: Hydroxyproline dehydrogenase (456 aa).

Lys310 and Lys320 each carry N6-acetyllysine.

This sequence belongs to the proline oxidase family. The cofactor is FAD.

It catalyses the reaction trans-4-hydroxy-L-proline + a quinone = (3R,5S)-1-pyrroline-3-hydroxy-5-carboxylate + a quinol + H(+). It carries out the reaction L-proline + a quinone = (S)-1-pyrroline-5-carboxylate + a quinol + H(+). Dehydrogenase that converts trans-4-L-hydroxyproline to delta-1-pyrroline-3-hydroxy-5-carboxylate (Hyp) using ubiquinone-10 as the terminal electron acceptor. Can also use proline as a substrate but with a very much lower efficiency. Does not react with other diastereomers of Hyp: trans-4-D-hydroxyproline and cis-4-L-hydroxyproline. Ubiquininone analogs such as menadione, duroquinone and ubiquinone-1 react more efficiently than oxygen as the terminal electron acceptor during catalysis. The chain is Hydroxyproline dehydrogenase from Rattus norvegicus (Rat).